Consider the following 428-residue polypeptide: Aspartic protease 10 (428 aa).

An N-terminal signal peptide occupies residues 1–16 (MKTFIALLALLTVVSA). Positions 72–425 (YMVQISLGSP…DMKSGRLGLA (354 aa)) constitute a Peptidase A1 domain. D90 is a catalytic residue. Residues N155 and N191 are each glycosylated (N-linked (GlcNAc...) asparagine). The active site involves D318. Cysteines 353 and 385 form a disulfide.

This sequence belongs to the peptidase A1 family. Proteolytically cleaved. Synthesized in the intestine. When secreted in low heme conditions, localizes to neurons near the anterior and posterior regions of the body and in coelomocytes.

The protein resides in the secreted. Aspartic protease which plays a role in heme homeostasis and mediates inter-organ signaling between the intestine and extra-intestinal tissues when cellular heme levels are low. The polypeptide is Aspartic protease 10 (Caenorhabditis elegans).